A 291-amino-acid chain; its full sequence is Bifunctional protein FolD 1 (291 aa).

NADP(+) contacts are provided by residues 167–169 (GAS), Ile-192, and Ile-233.

Belongs to the tetrahydrofolate dehydrogenase/cyclohydrolase family. In terms of assembly, homodimer.

It carries out the reaction (6R)-5,10-methylene-5,6,7,8-tetrahydrofolate + NADP(+) = (6R)-5,10-methenyltetrahydrofolate + NADPH. The catalysed reaction is (6R)-5,10-methenyltetrahydrofolate + H2O = (6R)-10-formyltetrahydrofolate + H(+). The protein operates within one-carbon metabolism; tetrahydrofolate interconversion. Its function is as follows. Catalyzes the oxidation of 5,10-methylenetetrahydrofolate to 5,10-methenyltetrahydrofolate and then the hydrolysis of 5,10-methenyltetrahydrofolate to 10-formyltetrahydrofolate. The sequence is that of Bifunctional protein FolD 1 from Pseudomonas putida (strain ATCC 47054 / DSM 6125 / CFBP 8728 / NCIMB 11950 / KT2440).